The sequence spans 102 residues: Protein RnfH (102 aa).

This sequence belongs to the UPF0125 (RnfH) family.

The chain is Protein RnfH from Haemophilus influenzae (strain PittEE).